The following is a 330-amino-acid chain: GTP 3',8-cyclase (330 aa).

A Radical SAM core domain is found at 9–225; that stretch reads RFGRTVNYVR…IRRHHELIPA (217 aa). Position 18 (R18) interacts with GTP. The [4Fe-4S] cluster site is built by C25 and C29. Position 31 (Y31) interacts with S-adenosyl-L-methionine. Residue C32 coordinates [4Fe-4S] cluster. A GTP-binding site is contributed by R67. An S-adenosyl-L-methionine-binding site is contributed by G71. T97 contributes to the GTP binding site. S121 serves as a coordination point for S-adenosyl-L-methionine. K158 provides a ligand contact to GTP. M192 is a binding site for S-adenosyl-L-methionine. [4Fe-4S] cluster is bound by residues C256 and C259. Residue 261 to 263 participates in GTP binding; sequence RVR. C273 is a [4Fe-4S] cluster binding site.

The protein belongs to the radical SAM superfamily. MoaA family. As to quaternary structure, monomer and homodimer. [4Fe-4S] cluster is required as a cofactor.

It carries out the reaction GTP + AH2 + S-adenosyl-L-methionine = (8S)-3',8-cyclo-7,8-dihydroguanosine 5'-triphosphate + 5'-deoxyadenosine + L-methionine + A + H(+). The protein operates within cofactor biosynthesis; molybdopterin biosynthesis. Functionally, catalyzes the cyclization of GTP to (8S)-3',8-cyclo-7,8-dihydroguanosine 5'-triphosphate. This is GTP 3',8-cyclase from Marinobacter nauticus (strain ATCC 700491 / DSM 11845 / VT8) (Marinobacter aquaeolei).